An 82-amino-acid polypeptide reads, in one-letter code: RNA-binding protein Hfq (82 aa).

The region spanning 11-71 is the Sm domain; the sequence is DTFLNHVRKT…ISTIMPGAPI (61 aa).

Belongs to the Hfq family. In terms of assembly, homohexamer.

Functionally, RNA chaperone that binds small regulatory RNA (sRNAs) and mRNAs to facilitate mRNA translational regulation in response to envelope stress, environmental stress and changes in metabolite concentrations. Also binds with high specificity to tRNAs. In Nitrobacter winogradskyi (strain ATCC 25391 / DSM 10237 / CIP 104748 / NCIMB 11846 / Nb-255), this protein is RNA-binding protein Hfq.